The following is a 301-amino-acid chain: Protoheme IX farnesyltransferase (301 aa).

Helical transmembrane passes span 30 to 50 (VISLLDLAAIAGFVLGLPKAI), 55 to 75 (IIVSFLAVIIGGSLASGGGMI), 106 to 126 (AYAIGSIFIVVGTLIGFLANP), 127 to 147 (LTALFIALGAFIYVVIYSIWL), 152 to 172 (WWNIVIGGFAGSAAAWAGFAA), 177 to 197 (FTLLSFLLGFLIFMWTPGHFW), 233 to 253 (ALMVPFALLIGLYAGLIYLIV), and 281 to 301 (FKLSSPYLAIILLTLIIVKLI).

It belongs to the UbiA prenyltransferase family. Protoheme IX farnesyltransferase subfamily.

The protein resides in the cell membrane. The enzyme catalyses heme b + (2E,6E)-farnesyl diphosphate + H2O = Fe(II)-heme o + diphosphate. It participates in porphyrin-containing compound metabolism; heme O biosynthesis; heme O from protoheme: step 1/1. Converts heme B (protoheme IX) to heme O by substitution of the vinyl group on carbon 2 of heme B porphyrin ring with a hydroxyethyl farnesyl side group. This is Protoheme IX farnesyltransferase from Sulfurisphaera tokodaii (strain DSM 16993 / JCM 10545 / NBRC 100140 / 7) (Sulfolobus tokodaii).